A 333-amino-acid chain; its full sequence is MLFFILFLSIISPIESVDQRIHHPSKCDHLSKFPTKGFTMVLKVSLNGCGRFKRVQDAIDASIGSSQSKTLILIDFGIYRERFIVHENKNNLVVQGMGYSRTSIEWNNTTASSNGTFSSFSVAVFGEKFTAYNISFKNTAPAPNPGAVDAQAVALKVVGDKAAFYGCGFYGNQDTLLDQEGRHFFKGCFIEGSIDFIFGNGRSLYEDCTLHSIAKENTIGCITANGKDTLKDRTGFVFVNCKITGSARVWLGRAWRPYARVIFSKTYMSRVVSLDGWNDMGDPKTQRTVYYGEHRCYGPGANHSKRVTYAKLLSDVEAAPFTNISFIDGEEWL.

The N-terminal stretch at 1–16 is a signal peptide; that stretch reads MLFFILFLSIISPIES. Asn-108 and Asn-114 each carry an N-linked (GlcNAc...) asparagine glycan. Residue Thr-116 coordinates substrate. N-linked (GlcNAc...) asparagine glycosylation is present at Asn-133. Residue Gln-151 participates in substrate binding. The Proton donor role is filled by Asp-174. Asp-195 (nucleophile) is an active-site residue. Arg-253 contributes to the substrate binding site. N-linked (GlcNAc...) asparagine glycans are attached at residues Asn-302 and Asn-323.

It belongs to the pectinesterase family. In terms of tissue distribution, expressed in flower buds.

It is found in the secreted. The protein localises to the cell wall. The enzyme catalyses [(1-&gt;4)-alpha-D-galacturonosyl methyl ester](n) + n H2O = [(1-&gt;4)-alpha-D-galacturonosyl](n) + n methanol + n H(+). Its pathway is glycan metabolism; pectin degradation; 2-dehydro-3-deoxy-D-gluconate from pectin: step 1/5. Functionally, acts in the modification of cell walls via demethylesterification of cell wall pectin. The chain is Putative pectinesterase 14 (PME14) from Arabidopsis thaliana (Mouse-ear cress).